The following is a 469-amino-acid chain: Cysteine protease ATG4D (469 aa).

Polar residues predominate over residues 1–29; sequence MNSVSPLATQYGSPKGSQQMENRSTQSGG. Residues 1 to 41 form a disordered region; the sequence is MNSVSPLATQYGSPKGSQQMENRSTQSGGHEQRKMGHQDAT. Catalysis depends on Cys-131, which acts as the Nucleophile. A disordered region spans residues 169–191; the sequence is IRSSSPPSMPLSSLATGHSAGDY. The span at 171-182 shows a compositional bias: low complexity; it reads SSSPPSMPLSSL. Residues Asp-356 and His-358 contribute to the active site. The tract at residues 436 to 469 is disordered; that stretch reads QEYAEGPQSSSHPPVCRKKGPLVKRPSSDEFEFL.

It belongs to the peptidase C54 family.

It localises to the cytoplasm. The catalysed reaction is [protein]-C-terminal L-amino acid-glycyl-phosphatidylethanolamide + H2O = [protein]-C-terminal L-amino acid-glycine + a 1,2-diacyl-sn-glycero-3-phosphoethanolamine. It catalyses the reaction [protein]-C-terminal L-amino acid-glycyl-phosphatidylserine + H2O = [protein]-C-terminal L-amino acid-glycine + a 1,2-diacyl-sn-glycero-3-phospho-L-serine. Functionally, cysteine protease that plays a key role in autophagy by mediating both proteolytic activation and delipidation of ATG8 family proteins. The protease activity is required for proteolytic activation of ATG8 family proteins to reveal a C-terminal glycine. Exposure of the glycine at the C-terminus is essential for ATG8 proteins conjugation to phosphatidylethanolamine (PE) and insertion to membranes, which is necessary for autophagy. In addition to the protease activity, also mediates delipidation of ATG8 family proteins. Catalyzes delipidation of PE-conjugated forms of ATG8 proteins during macroautophagy. Also involved in non-canonical autophagy, a parallel pathway involving conjugation of ATG8 proteins to single membranes at endolysosomal compartments, by catalyzing delipidation of ATG8 proteins conjugated to phosphatidylserine (PS). The polypeptide is Cysteine protease ATG4D (Xenopus laevis (African clawed frog)).